A 185-amino-acid polypeptide reads, in one-letter code: Ribosome-recycling factor (185 aa).

The protein belongs to the RRF family.

The protein localises to the cytoplasm. Functionally, responsible for the release of ribosomes from messenger RNA at the termination of protein biosynthesis. May increase the efficiency of translation by recycling ribosomes from one round of translation to another. The chain is Ribosome-recycling factor from Pseudothermotoga lettingae (strain ATCC BAA-301 / DSM 14385 / NBRC 107922 / TMO) (Thermotoga lettingae).